The chain runs to 152 residues: Biotin carboxyl carrier protein of acetyl-CoA carboxylase (152 aa).

The Biotinyl-binding domain occupies 72–148 (IIDILSPISG…TKNQVLMKII (77 aa)). N6-biotinyllysine is present on Lys-114.

It localises to the plastid. It is found in the chloroplast. It functions in the pathway lipid metabolism; fatty acid biosynthesis. This protein is a component of the acetyl coenzyme A carboxylase complex; first, biotin carboxylase catalyzes the carboxylation of the carrier protein and then the transcarboxylase transfers the carboxyl group to form malonyl-CoA. The protein is Biotin carboxyl carrier protein of acetyl-CoA carboxylase (accB) of Cyanidium caldarium (Red alga).